The primary structure comprises 345 residues: Annexin A9 (345 aa).

4 Annexin repeats span residues 41–112 (FSVD…ALLQ), 113–184 (PTAQ…ALAK), 197–266 (NLAE…GLAS), and 270–341 (NTPL…ALCR).

Belongs to the annexin family. In terms of assembly, homodimer. As to expression, expressed in the stratified squamous skin epithelium, but not in epithelia of other types (at protein level).

Low affinity receptor for acetylcholine known to be targeted by disease-causing pemphigus vulgaris antibodies in keratinocytes. This Homo sapiens (Human) protein is Annexin A9 (ANXA9).